The following is a 335-amino-acid chain: Flagellar P-ring protein (335 aa).

An N-terminal signal peptide occupies residues 1-24 (MNKITNFLILSAVLFFSLIESANA).

This sequence belongs to the FlgI family. As to quaternary structure, the basal body constitutes a major portion of the flagellar organelle and consists of four rings (L,P,S, and M) mounted on a central rod.

The protein resides in the periplasm. It is found in the bacterial flagellum basal body. Its function is as follows. Assembles around the rod to form the L-ring and probably protects the motor/basal body from shearing forces during rotation. The chain is Flagellar P-ring protein from Bdellovibrio bacteriovorus (strain ATCC 15356 / DSM 50701 / NCIMB 9529 / HD100).